A 233-amino-acid chain; its full sequence is Large ribosomal subunit protein uL1 (233 aa).

Belongs to the universal ribosomal protein uL1 family. In terms of assembly, part of the 50S ribosomal subunit.

Functionally, binds directly to 23S rRNA. The L1 stalk is quite mobile in the ribosome, and is involved in E site tRNA release. Its function is as follows. Protein L1 is also a translational repressor protein, it controls the translation of the L11 operon by binding to its mRNA. This chain is Large ribosomal subunit protein uL1, found in Brucella anthropi (strain ATCC 49188 / DSM 6882 / CCUG 24695 / JCM 21032 / LMG 3331 / NBRC 15819 / NCTC 12168 / Alc 37) (Ochrobactrum anthropi).